Consider the following 363-residue polypeptide: Mitogen-activated protein kinase 13 (363 aa).

The Protein kinase domain occupies Ile33–Leu319. Residues Ile39–Val47 and Lys62 contribute to the ATP site. The active-site Proton acceptor is the Asp159. Thr191 is modified (phosphothreonine). The short motif at Thr191–Tyr193 is the TXY element. Residue Tyr193 is modified to Phosphotyrosine. A Phosphothreonine modification is found at Thr196.

Belongs to the protein kinase superfamily. CMGC Ser/Thr protein kinase family. MAP kinase subfamily. In terms of assembly, interacts with MKK6. Post-translationally, dually phosphorylated on Thr-191 and Tyr-193, which activates the enzyme. Expressed in roots, stems and flower buds.

It catalyses the reaction L-seryl-[protein] + ATP = O-phospho-L-seryl-[protein] + ADP + H(+). It carries out the reaction L-threonyl-[protein] + ATP = O-phospho-L-threonyl-[protein] + ADP + H(+). Its activity is regulated as follows. Activated by threonine and tyrosine phosphorylation. Activated by the MAP kinase kinase MKK6 in vitro. In terms of biological role, MKK6-MPK13 module positively regulates lateral root formation. The protein is Mitogen-activated protein kinase 13 (MPK13) of Arabidopsis thaliana (Mouse-ear cress).